A 428-amino-acid chain; its full sequence is Serine--tRNA ligase (428 aa).

235-237 (TAE) serves as a coordination point for L-serine. Residue 266-268 (RSE) participates in ATP binding. E289 is a binding site for L-serine. 353-356 (EISS) provides a ligand contact to ATP. S389 is an L-serine binding site.

This sequence belongs to the class-II aminoacyl-tRNA synthetase family. Type-1 seryl-tRNA synthetase subfamily. In terms of assembly, homodimer. The tRNA molecule binds across the dimer.

It is found in the cytoplasm. It carries out the reaction tRNA(Ser) + L-serine + ATP = L-seryl-tRNA(Ser) + AMP + diphosphate + H(+). The enzyme catalyses tRNA(Sec) + L-serine + ATP = L-seryl-tRNA(Sec) + AMP + diphosphate + H(+). It participates in aminoacyl-tRNA biosynthesis; selenocysteinyl-tRNA(Sec) biosynthesis; L-seryl-tRNA(Sec) from L-serine and tRNA(Sec): step 1/1. Catalyzes the attachment of serine to tRNA(Ser). Is also able to aminoacylate tRNA(Sec) with serine, to form the misacylated tRNA L-seryl-tRNA(Sec), which will be further converted into selenocysteinyl-tRNA(Sec). The polypeptide is Serine--tRNA ligase (Shewanella sp. (strain ANA-3)).